The primary structure comprises 37 residues: Large ribosomal subunit protein bL36 (37 aa).

Belongs to the bacterial ribosomal protein bL36 family.

The protein is Large ribosomal subunit protein bL36 of Staphylococcus carnosus (strain TM300).